The chain runs to 785 residues: E3 UFM1-protein ligase 1 homolog (785 aa).

Basic and acidic residues predominate over residues 396 to 416 (MKHQDVIPDKESAENKADKRD). Residues 396–473 (MKHQDVIPDK…KSAGGKKGAK (78 aa)) form a disordered region. The span at 439–449 (KSTKKHARGHR) shows a compositional bias: basic residues.

Belongs to the UFL1 family.

E3 UFM1-protein ligase that mediates ufmylation of target proteins. This chain is E3 UFM1-protein ligase 1 homolog, found in Culex quinquefasciatus (Southern house mosquito).